Consider the following 344-residue polypeptide: Ferredoxin--NADP reductase (344 aa).

The FAD site is built by D36, Q44, Y49, V89, F127, D291, and T332.

This sequence belongs to the ferredoxin--NADP reductase type 2 family. Homodimer. The cofactor is FAD.

It carries out the reaction 2 reduced [2Fe-2S]-[ferredoxin] + NADP(+) + H(+) = 2 oxidized [2Fe-2S]-[ferredoxin] + NADPH. This is Ferredoxin--NADP reductase from Beijerinckia indica subsp. indica (strain ATCC 9039 / DSM 1715 / NCIMB 8712).